Here is a 156-residue protein sequence, read N- to C-terminus: MPTWHYSVRVDEEKSAKAMVWDAPISYKKIVELARLLKGMKVDEARRFLERVARGEEPIPVRRYSGKQAHHRGLAAKYKWPIGRYPVKAAKILLRLLDNVTNNAEVKGLDTERLRIVHIAVHKGRVLKRWMPRAFGRATPKFKKYSHIEIVVAEEE.

Belongs to the universal ribosomal protein uL22 family. In terms of assembly, part of the 50S ribosomal subunit.

Its function is as follows. This protein binds specifically to 23S rRNA. It makes multiple contacts with different domains of the 23S rRNA in the assembled 50S subunit and ribosome. Functionally, the globular domain of the protein is located near the polypeptide exit tunnel on the outside of the subunit, while an extended beta-hairpin is found that lines the wall of the exit tunnel in the center of the 70S ribosome. In Hyperthermus butylicus (strain DSM 5456 / JCM 9403 / PLM1-5), this protein is Large ribosomal subunit protein uL22.